A 342-amino-acid chain; its full sequence is Protein-ribulosamine 3-kinase, chloroplastic (342 aa).

The transit peptide at 1–46 directs the protein to the chloroplast; the sequence is MANVALLSAASPSTSSAAPRLRHVARRRPSRRSACPRSAASRLSIM. ATP is bound at residue 141-143; it reads EFI. Asp246 functions as the Proton acceptor in the catalytic mechanism.

It belongs to the fructosamine kinase family.

It localises to the plastid. Its subcellular location is the chloroplast. It catalyses the reaction N(6)-D-ribulosyl-L-lysyl-[protein] + ATP = N(6)-(3-O-phospho-D-ribulosyl)-L-lysyl-[protein] + ADP + H(+). The enzyme catalyses N(6)-(D-erythrulosyl)-L-lysyl-[protein] + ATP = N(6)-(3-O-phospho-D-erythrulosyl)-L-lysyl-[protein] + ADP + H(+). Its function is as follows. Initiates a process leading to the deglycation of proteins. Phosphorylates low-molecular-mass and protein-bound erythrulosamines and ribulosamines, but not fructosamines or psicosamines, on the third carbon of the sugar moiety. Protein-bound erythrulosamine 3-phosphates and ribulosamine 3-phosphates are unstable and decompose under physiological conditions. The sequence is that of Protein-ribulosamine 3-kinase, chloroplastic from Oryza sativa subsp. indica (Rice).